The sequence spans 373 residues: Flagellar P-ring protein (373 aa).

The signal sequence occupies residues 1–26; sequence MKLFFRFVTLVAVLAMSLANVAPAWA.

This sequence belongs to the FlgI family. As to quaternary structure, the basal body constitutes a major portion of the flagellar organelle and consists of four rings (L,P,S, and M) mounted on a central rod.

Its subcellular location is the periplasm. The protein localises to the bacterial flagellum basal body. In terms of biological role, assembles around the rod to form the L-ring and probably protects the motor/basal body from shearing forces during rotation. This is Flagellar P-ring protein from Rhizobium johnstonii (strain DSM 114642 / LMG 32736 / 3841) (Rhizobium leguminosarum bv. viciae).